A 488-amino-acid chain; its full sequence is Serine/threonine-protein kinase 32C (488 aa).

Residues 1–56 are disordered; it reads MRSGAERRGSSAAAPPSSPPPGRARPAGSDVSPALPPPAASQPRARDAGDARAQPR. A phosphoserine mark is found at S10, S17, and S18. Residues 24–33 are compositionally biased toward low complexity; sequence ARPAGSDVSP. Residues 94 to 354 enclose the Protein kinase domain; sequence FQILRAIGKG…LQDMQTAPSL (261 aa). ATP-binding positions include 100–108 and K123; that span reads IGKGSFGKV. D217 serves as the catalytic Proton acceptor. Over residues 397-406 the composition is skewed to basic residues; that stretch reads HKKKKRLAKN. 2 disordered regions span residues 397-420 and 443-488; these read HKKK…QSEN and KRSQ…SGSS.

It belongs to the protein kinase superfamily. Ser/Thr protein kinase family. Mg(2+) serves as cofactor.

The enzyme catalyses L-seryl-[protein] + ATP = O-phospho-L-seryl-[protein] + ADP + H(+). It catalyses the reaction L-threonyl-[protein] + ATP = O-phospho-L-threonyl-[protein] + ADP + H(+). The polypeptide is Serine/threonine-protein kinase 32C (Mus musculus (Mouse)).